Reading from the N-terminus, the 196-residue chain is Holliday junction branch migration complex subunit RuvA (196 aa).

The domain I stretch occupies residues 1–63; sequence MINKIYGKVI…ENELKLFGFL (63 aa). A domain II region spans residues 64–139; that stretch reads NSDERETFKS…KLLINNELES (76 aa). A region of interest (flexible linker) is located at residue S139. A domain III region spans residues 139–196; the sequence is SSLFRFKELEESIVSMGFDRKIVNSKLKEAFNLVEFSNLKDSEKEQFLFKEVLKRMSN.

The protein belongs to the RuvA family. Homotetramer. Forms an RuvA(8)-RuvB(12)-Holliday junction (HJ) complex. HJ DNA is sandwiched between 2 RuvA tetramers; dsDNA enters through RuvA and exits via RuvB. An RuvB hexamer assembles on each DNA strand where it exits the tetramer. Each RuvB hexamer is contacted by two RuvA subunits (via domain III) on 2 adjacent RuvB subunits; this complex drives branch migration. In the full resolvosome a probable DNA-RuvA(4)-RuvB(12)-RuvC(2) complex forms which resolves the HJ.

It localises to the cytoplasm. Its function is as follows. The RuvA-RuvB-RuvC complex processes Holliday junction (HJ) DNA during genetic recombination and DNA repair, while the RuvA-RuvB complex plays an important role in the rescue of blocked DNA replication forks via replication fork reversal (RFR). RuvA specifically binds to HJ cruciform DNA, conferring on it an open structure. The RuvB hexamer acts as an ATP-dependent pump, pulling dsDNA into and through the RuvAB complex. HJ branch migration allows RuvC to scan DNA until it finds its consensus sequence, where it cleaves and resolves the cruciform DNA. In Borreliella afzelii (strain PKo) (Borrelia afzelii), this protein is Holliday junction branch migration complex subunit RuvA.